A 108-amino-acid chain; its full sequence is Nucleoid-associated protein Mmwyl1_2533 (108 aa).

Residues 1-22 form a disordered region; that stretch reads MFKGGMGNMMRQAQQMQENMQK. A compositionally biased stretch (polar residues) spans 11–22; sequence RQAQQMQENMQK.

It belongs to the YbaB/EbfC family. In terms of assembly, homodimer.

The protein localises to the cytoplasm. It is found in the nucleoid. In terms of biological role, binds to DNA and alters its conformation. May be involved in regulation of gene expression, nucleoid organization and DNA protection. This Marinomonas sp. (strain MWYL1) protein is Nucleoid-associated protein Mmwyl1_2533.